The following is a 262-amino-acid chain: Putative hydro-lyase RHA1_ro03475 (262 aa).

The protein belongs to the D-glutamate cyclase family.

This is Putative hydro-lyase RHA1_ro03475 from Rhodococcus jostii (strain RHA1).